A 271-amino-acid polypeptide reads, in one-letter code: Aquaporin-11 (271 aa).

The Cytoplasmic portion of the chain corresponds to 1 to 14 (MSALLGLRPEVQDT). A helical transmembrane segment spans residues 15-35 (CISLGLMLLFVLFVGLARVIA). Topologically, residues 36 to 41 (RQQLHR) are lumenal. Residues 42-62 (PVVHAFVLEFLATFQLCCCTH) form a helical membrane-spanning segment. Residues 63-76 (ELQVLSEQDSAHPT) lie on the Cytoplasmic side of the membrane. A helical transmembrane segment spans residues 77 to 97 (WTLTLIYFFSLVHGLTLVGTA). Residues 98–166 (SNPCGVMMQM…NPIHTDMSKA (69 aa)) lie on the Lumenal side of the membrane. An NPC motif is present at residues 99–101 (NPC). The helical transmembrane segment at 167-187 (IIIEAICSFIFHSALLHFQEV) threads the bilayer. Over 188-194 (RTKLRIH) the chain is Cytoplasmic. The chain crosses the membrane as a helical span at residues 195–215 (LLAALITFLAYAGGSLTGALF). The NPA signature appears at 216–218 (NPA). Over 216 to 234 (NPALALSLHFPCFDELFYK) the chain is Lumenal. The helical transmembrane segment at 235–255 (FFVVYWLAPSVGVLMMILMFS) threads the bilayer. The Cytoplasmic portion of the chain corresponds to 256–271 (FFLPWLHNNQMTNKKE).

It belongs to the MIP/aquaporin (TC 1.A.8) family. AQP11/AQP12 subfamily. In terms of assembly, homodimer; disulfide-linked. Homotetramer. Can also form homomultimer. Post-translationally, not glycosylated. In terms of tissue distribution, highly expressed in the S1 proximal tubule segment,. Expressed in the testis, kidney, and liver. Weakly expressed in the heart, brain, and muscle. Highly expressed in the testis. Expressed in the proximal tubule of the cortex of 8-day-old mouse kidney. Expressed in retina specifically at retinal Mueller glial cells. Expressed in brain. Expressed abundantly at the choroid plexus but also expressed weakly in the parenchyma. Expressed at the capillary endothelium in the cerebral white matter. Expressed in adult testis, in the elongated spermatids (ES) and in residual bodies inside Sertoli cells.

The protein localises to the endoplasmic reticulum membrane. It is found in the cytoplasmic vesicle membrane. It localises to the cell membrane. The catalysed reaction is H2O(in) = H2O(out). It catalyses the reaction glycerol(in) = glycerol(out). It carries out the reaction H2O2(out) = H2O2(in). Channel protein that facilitates the transport of water, glycerol and hydrogen peroxide across membrane of cell or organelles guaranteeing intracellular homeostasis in several organes like liver, kidney and brain. In situation of stress, participates in endoplasmic reticulum (ER) homeostasis by regulating redox homeostasis through the transport of hydrogen peroxide across the endoplasmic reticulum membrane thereby regulating the oxidative stress through the NADPH oxidase 2 pathway. Plays a role by maintaining an environment suitable for translation or protein foldings in the ER lumen namely by participating in the PKD1 glycosylation processing resulting in regulation of PKD1 membrane trafficking thereby preventing the accumulation of unfolding protein in ER. Plays a role in the proximal tubule function by regulating its endosomal acidification. May play a role in postnatal kidney development. This is Aquaporin-11 from Mus musculus (Mouse).